The chain runs to 340 residues: Flap endonuclease 1 (340 aa).

The interval 1 to 98 (MGLNLKDLVV…AEIERRKQIK (98 aa)) is N-domain. Mg(2+) contacts are provided by D27, D80, E152, E154, D173, D175, and D236. The interval 116 to 258 (DARKYAQQTT…TALKMIKQHS (143 aa)) is I-domain.

It belongs to the XPG/RAD2 endonuclease family. FEN1 subfamily. Interacts with PCNA. PCNA stimulates the nuclease activity without altering cleavage specificity. Mg(2+) serves as cofactor.

Functionally, structure-specific nuclease with 5'-flap endonuclease and 5'-3' exonuclease activities involved in DNA replication and repair. During DNA replication, cleaves the 5'-overhanging flap structure that is generated by displacement synthesis when DNA polymerase encounters the 5'-end of a downstream Okazaki fragment. Binds the unpaired 3'-DNA end and kinks the DNA to facilitate 5' cleavage specificity. Cleaves one nucleotide into the double-stranded DNA from the junction in flap DNA, leaving a nick for ligation. Also involved in the base excision repair (BER) pathway. Acts as a genome stabilization factor that prevents flaps from equilibrating into structures that lead to duplications and deletions. Also possesses 5'-3' exonuclease activity on nicked or gapped double-stranded DNA. The sequence is that of Flap endonuclease 1 from Nitrosopumilus maritimus (strain SCM1).